The chain runs to 168 residues: Large ribosomal subunit protein uL29c (168 aa).

Residues 1 to 20 (MLAIHSLSSTPCSSGLTSPP) are disordered. The transit peptide at 1–58 (MLAIHSLSSTPCSSGLTSPPKSTLLTKSSFHGLRLPSVNLSSSLRLRVQTPPSSVVVM) directs the protein to the chloroplast.

As to quaternary structure, component of the chloroplast large ribosomal subunit (LSU). Mature 70S chloroplast ribosomes of higher plants consist of a small (30S) and a large (50S) subunit. The 30S small subunit contains 1 molecule of ribosomal RNA (16S rRNA) and 24 different proteins. The 50S large subunit contains 3 rRNA molecules (23S, 5S and 4.5S rRNA) and 33 different proteins.

It localises to the plastid. It is found in the chloroplast. Component of the chloroplast ribosome (chloro-ribosome), a dedicated translation machinery responsible for the synthesis of chloroplast genome-encoded proteins, including proteins of the transcription and translation machinery and components of the photosynthetic apparatus. This chain is Large ribosomal subunit protein uL29c (RPL29), found in Spinacia oleracea (Spinach).